The sequence spans 509 residues: ATP synthase subunit alpha (509 aa).

Residue 169–176 (GDRKTGKT) participates in ATP binding.

It belongs to the ATPase alpha/beta chains family. In terms of assembly, F-type ATPases have 2 components, CF(1) - the catalytic core - and CF(0) - the membrane proton channel. CF(1) has five subunits: alpha(3), beta(3), gamma(1), delta(1), epsilon(1). CF(0) has three main subunits: a(1), b(2) and c(9-12). The alpha and beta chains form an alternating ring which encloses part of the gamma chain. CF(1) is attached to CF(0) by a central stalk formed by the gamma and epsilon chains, while a peripheral stalk is formed by the delta and b chains.

The protein resides in the cell membrane. It carries out the reaction ATP + H2O + 4 H(+)(in) = ADP + phosphate + 5 H(+)(out). Its function is as follows. Produces ATP from ADP in the presence of a proton gradient across the membrane. The alpha chain is a regulatory subunit. In Limosilactobacillus reuteri (strain DSM 20016) (Lactobacillus reuteri), this protein is ATP synthase subunit alpha.